A 785-amino-acid polypeptide reads, in one-letter code: Cation/H(+) antiporter 1 (785 aa).

The next 12 membrane-spanning stretches (helical) occupy residues 19-39 (LNTM…FYLF), 44-64 (GQAG…LTII), 79-99 (YYIF…GLEI), 112-132 (IVIT…FLWF), 143-163 (FLTF…PVVI), 179-199 (LAIS…TIVL), 201-221 (FISG…GVII), 240-260 (YLSK…ALTI), 294-314 (YPIH…RFSV), 323-343 (LVLG…VLFA), 352-372 (QYWL…LVLL), and 389-409 (MFVA…SLLL).

The protein belongs to the monovalent cation:proton antiporter 2 (CPA2) transporter (TC 2.A.37) family. CHX (TC 2.A.37.4) subfamily. Specifically expressed in pollen.

It localises to the membrane. In terms of biological role, may operate as a cation/H(+) antiporter. This chain is Cation/H(+) antiporter 1 (CHX1), found in Arabidopsis thaliana (Mouse-ear cress).